Here is a 935-residue protein sequence, read N- to C-terminus: C-1-tetrahydrofolate synthase, cytoplasmic (935 aa).

Methionine 1 carries the post-translational modification N-acetylmethionine. The interval 2 to 291 (APAGILNGKV…MLMQSTVESA (290 aa)) is methylenetetrahydrofolate dehydrogenase and methenyltetrahydrofolate cyclohydrolase (D/C) domain. Residues 52–56 (YINVK) and 99–101 (VQL) contribute to the substrate site. Lysine 56 is an active-site residue. NADP(+)-binding positions include 172–174 (GRS) and serine 197. 272–276 (PGGVG) is a binding site for substrate. The formyltetrahydrofolate synthetase domain stretch occupies residues 310–935 (LNLKTPVPSD…PETEQVNGLF (626 aa)). Residue serine 318 is modified to Phosphoserine. Position 380 to 387 (380 to 387 (TPLGEGKS)) interacts with ATP. A phosphoserine mark is found at serine 413 and serine 490.

This sequence in the N-terminal section; belongs to the tetrahydrofolate dehydrogenase/cyclohydrolase family. It in the C-terminal section; belongs to the formate--tetrahydrofolate ligase family. As to quaternary structure, homodimer.

It localises to the cytoplasm. It catalyses the reaction (6R)-5,10-methylene-5,6,7,8-tetrahydrofolate + NADP(+) = (6R)-5,10-methenyltetrahydrofolate + NADPH. The enzyme catalyses (6R)-5,10-methenyltetrahydrofolate + H2O = (6R)-10-formyltetrahydrofolate + H(+). It carries out the reaction (6S)-5,6,7,8-tetrahydrofolate + formate + ATP = (6R)-10-formyltetrahydrofolate + ADP + phosphate. Its pathway is one-carbon metabolism; tetrahydrofolate interconversion. Trifunctional enzyme that catalyzes the interconversion of three forms of one-carbon-substituted tetrahydrofolate: (6R)-5,10-methylene-5,6,7,8-tetrahydrofolate, 5,10-methenyltetrahydrofolate and (6S)-10-formyltetrahydrofolate. These derivatives of tetrahydrofolate are differentially required in nucleotide and amino acid biosynthesis, (6S)-10-formyltetrahydrofolate being required for purine biosynthesis while (6R)-5,10-methylene-5,6,7,8-tetrahydrofolate is used for serine and methionine biosynthesis for instance. In Rattus norvegicus (Rat), this protein is C-1-tetrahydrofolate synthase, cytoplasmic (Mthfd1).